A 531-amino-acid chain; its full sequence is DnaJ homolog subfamily C member 21 (531 aa).

The region spanning 3 to 69 (CHYEALGVRR…QERAWYDNHR (67 aa)) is the J domain. 3 disordered regions span residues 279–311 (FGDGSDENEMEEHELKDEEDGKDSDEAEDAELY), 327–474 (KAMK…VPAE), and 502–531 (KATGHARAPSSSSLNSATSSQSKKEKRKNR). Acidic residues predominate over residues 281–311 (DGSDENEMEEHELKDEEDGKDSDEAEDAELY). Serine 283 and serine 302 each carry phosphoserine. The segment at 314–338 (LYCPACDKSFKTEKAMKNHEKSKKH) adopts a C2H2-type 1 zinc-finger fold. Over residues 364–375 (NPLDDNSEEEME) the composition is skewed to acidic residues. Serine 370 carries the post-translational modification Phosphoserine. A compositionally biased stretch (basic residues) spans 381–392 (KLSKKQKKKKQK). The segment covering 393 to 403 (PAQNYDDNFNV) has biased composition (polar residues). Positions 442 to 453 (KPCDDPKSEAKS) are enriched in basic and acidic residues. Residues 455-464 (PKPKGKKTKD) are compositionally biased toward basic residues. The segment at 482 to 506 (ISCTTCHSEFPSRNKLFDHLKATGH) adopts a C2H2-type 2 zinc-finger fold. Position 511 is a phosphoserine (serine 511). Positions 511-522 (SSSSLNSATSSQ) are enriched in low complexity.

Interacts with HSPA8, PA2G4 and ZNF622. As to expression, expressed in brain, placenta, kidney and pancreas.

It is found in the cytoplasm. Its subcellular location is the nucleus. The protein localises to the nucleolus. May act as a co-chaperone for HSP70. May play a role in ribosomal RNA (rRNA) biogenesis, possibly in the maturation of the 60S subunit. Binds the precursor 45S rRNA. This chain is DnaJ homolog subfamily C member 21 (DNAJC21), found in Homo sapiens (Human).